The chain runs to 957 residues: Translation initiation factor IF-2 (957 aa).

Disordered regions lie at residues 34–282 (KSHS…RVVK) and 311–367 (SQSL…TIAG). Over residues 107-161 (PARPQPPQAPTRPTPPAPVAPKPVEPVAAKPPAPPAKPEPTPPRPVPTLVPPPTR) the composition is skewed to pro residues. Over residues 163–188 (TKKEEKVAATPPPRKELKEPPKKEKG) the composition is skewed to basic and acidic residues. Pro residues predominate over residues 209 to 242 (PPAPAKPPEMAPKPALPELQPPPKPVRAPNPPKP). Basic and acidic residues-rich tracts occupy residues 250–259 (LDDKSVSKVI) and 266–275 (KDFDEEESKR). Positions 444–617 (RRPPVVTIMG…LLVAEVEDLY (174 aa)) constitute a tr-type G domain. Residues 453-460 (GHVDHGKT) form a G1 region. Residue 453-460 (GHVDHGKT) coordinates GTP. The interval 478–482 (GITQH) is G2. Residues 503 to 506 (DTPG) form a G3 region. Residues 503-507 (DTPGH) and 557-560 (NKID) contribute to the GTP site. Positions 557–560 (NKID) are G4. A G5 region spans residues 593-595 (SAL).

The protein belongs to the TRAFAC class translation factor GTPase superfamily. Classic translation factor GTPase family. IF-2 subfamily.

It is found in the cytoplasm. In terms of biological role, one of the essential components for the initiation of protein synthesis. Protects formylmethionyl-tRNA from spontaneous hydrolysis and promotes its binding to the 30S ribosomal subunits. Also involved in the hydrolysis of GTP during the formation of the 70S ribosomal complex. The protein is Translation initiation factor IF-2 of Thermosynechococcus vestitus (strain NIES-2133 / IAM M-273 / BP-1).